The sequence spans 406 residues: Multidrug resistance protein MdtG (406 aa).

The next 11 helical transmembrane spans lie at 16 to 36, 56 to 76, 90 to 110, 113 to 133, 144 to 164, 171 to 191, 222 to 242, 254 to 274, 288 to 308, 317 to 337, and 376 to 396; these read VAWLGCFLTGAAFSLVMPFLP, LVFSITFLFSAIASPFWGGLA, LGMAIVMLLMGLAQNIWQFLL, ALLGLLGGFVPNANALIATQV, TLSTGGVSGALLGPLAGGLLA, PVFFITASVLLVCFLLTLFFT, LFVTTLIIQVATGSIAPILTL, IAFISGMIASVPGVAALLSAP, ILITALIISVLLLIPMSFVQT, FLLGAADGALLPAVQTLLVYN, and AVFCVTAGVVLFNAIYSWNSL.

This sequence belongs to the major facilitator superfamily. DHA1 family. MdtG (TC 2.A.1.2.20) subfamily.

It localises to the cell inner membrane. This chain is Multidrug resistance protein MdtG, found in Citrobacter koseri (strain ATCC BAA-895 / CDC 4225-83 / SGSC4696).